The sequence spans 263 residues: HTH-type transcriptional repressor NanR (263 aa).

The 69-residue stretch at 30 to 98 (KKLSEMVEEE…NGERARVSRP (69 aa)) folds into the HTH gntR-type domain. Positions 58-77 (ERELMAFFNVGRPSVREALA) form a DNA-binding region, H-T-H motif.

Belongs to the NanR family.

Its function is as follows. Transcriptional repressor that controls expression of the genes required for the catabolism of sialic acids. The protein is HTH-type transcriptional repressor NanR of Salmonella arizonae (strain ATCC BAA-731 / CDC346-86 / RSK2980).